The following is a 257-amino-acid chain: GTP cyclohydrolase 1 type 2 homolog (257 aa).

Residues His65, Asp103, His221, and Glu224 each coordinate a divalent metal cation.

It belongs to the GTP cyclohydrolase I type 2/NIF3 family. As to quaternary structure, homohexamer.

This Lactococcus lactis subsp. lactis (strain IL1403) (Streptococcus lactis) protein is GTP cyclohydrolase 1 type 2 homolog (ykiD).